The sequence spans 1036 residues: Lethal(2) giant larvae protein homolog 1 (1036 aa).

10 WD repeats span residues 38–71, 78–119, 139–175, 199–233, 239–271, 289–331, 339–373, 395–473, 517–592, and 601–662; these read SALA…FTGL, VTQM…GLSF, VTVV…GQTL, SLQG…DNVF, LESL…GSPP, AINK…ETLV, VIDF…VLDL, TCSA…YKLS, QKVA…RMLI, and TAVT…LRQS. The residue at position 662 (Ser-662) is a Phosphoserine. Positions 667–677 are enriched in basic residues; that stretch reads RKSRVSGKKRT. Residues 667–688 are disordered; it reads RKSRVSGKKRTPAASSKLQEAN. Polar residues predominate over residues 679–688; that stretch reads AASSKLQEAN. WD repeat units follow at residues 722 to 782, 791 to 843, 848 to 901, and 915 to 938; these read VRCL…KEVQ, AIAV…VSAK, LTAH…VHYS, and VFTR…SLSA. Residue Thr-957 is modified to Phosphothreonine. A phosphoserine mark is found at Ser-964, Ser-982, and Ser-989. The interval 980–1002 is disordered; that stretch reads PESCEGSPSSAHSKRADTMEPPE.

This sequence belongs to the WD repeat L(2)GL family. As to quaternary structure, associated with nonmuscle myosin II heavy chain. Interacts with PRKCI/aPKC, PARD6B/Par-6 and PARD6A. Interacts with STX4A. Interacts with RAB10 (GDP-bound form); the interaction is direct and promotes RAB10 association with membranes and activation through competition with the Rab inhibitor GDI1. Interacts with DCAF1. Phosphorylated by PRKCI on at least one of the following Ser residues: Ser 654, Ser-658, Ser-662, Ser-669 and Ser-672. Phosphorylation is important for appropriated cell polarization.

Its subcellular location is the early endosome membrane. It is found in the golgi apparatus. The protein resides in the trans-Golgi network membrane. The protein localises to the golgi apparatus membrane. It localises to the cell projection. Its subcellular location is the axon. It is found in the cytoplasm. The protein resides in the cytoskeleton. Cortical cytoskeleton protein found in a complex involved in maintaining cell polarity and epithelial integrity. Involved in the regulation of mitotic spindle orientation, proliferation, differentiation and tissue organization of neuroepithelial cells. Involved in axonogenesis through RAB10 activation thereby regulating vesicular membrane trafficking toward the axonal plasma membrane. The polypeptide is Lethal(2) giant larvae protein homolog 1 (Llgl1) (Mus musculus (Mouse)).